A 447-amino-acid polypeptide reads, in one-letter code: Chordin-like protein 1 (447 aa).

Residues 1 to 22 (MEGIKYIASLVFFFVFLEASKT) form the signal peptide. VWFC domains follow at residues 30 to 95 (TYCM…PRCP) and 108 to 174 (KSCE…RVCR). Asn113 is a glycosylation site (N-linked (GlcNAc...) asparagine). The Cell attachment site motif lies at 174 to 176 (RGD). The tract at residues 199 to 219 (HSYLRSPYDPPPSRQAGGLPR) is disordered. Positions 253-318 (QVCVSNGKTY…LDGKCCKVCP (66 aa)) constitute a VWFC 3 domain. N-linked (GlcNAc...) asparagine glycosylation occurs at Asn286.

The protein resides in the secreted. Seems to antagonize the function of BMP4 by binding to it and preventing its interaction with receptors. Alters the fate commitment of neural stem cells from gliogenesis to neurogenesis. Contributes to neuronal differentiation of neural stem cells in the brain by preventing the adoption of a glial fate. May play a crucial role in dorsoventral axis formation. May play a role in embryonic bone formation. Plays a role during anterior segment eye development. This Rattus norvegicus (Rat) protein is Chordin-like protein 1 (Chrdl1).